Reading from the N-terminus, the 68-residue chain is Conotoxin Mr3.4 (68 aa).

The signal sequence occupies residues 1-19; the sequence is MSKLGVLLTICLLLFPLTA. A propeptide spanning residues 20-49 is cleaved from the precursor; sequence VPLDGDQPADRPAERMQDDISSERHPFFDR. Intrachain disulfides connect C53-C67, C54-C63, and C59-C66. P65 is subject to 4-hydroxyproline.

Belongs to the conotoxin M superfamily. Expressed by the venom duct.

It localises to the secreted. The polypeptide is Conotoxin Mr3.4 (Conus marmoreus (Marble cone)).